Here is a 468-residue protein sequence, read N- to C-terminus: Cysteine--tRNA ligase (468 aa).

Cys36 serves as a coordination point for Zn(2+). The short motif at 38-48 is the 'HIGH' region element; sequence PTVYNRSHIGN. Zn(2+) contacts are provided by Cys216, His241, and Glu245. Residues 274–278 carry the 'KMSKS' region motif; that stretch reads KMSKS. Residue Lys277 participates in ATP binding.

It belongs to the class-I aminoacyl-tRNA synthetase family. Monomer. Zn(2+) is required as a cofactor.

It localises to the cytoplasm. The enzyme catalyses tRNA(Cys) + L-cysteine + ATP = L-cysteinyl-tRNA(Cys) + AMP + diphosphate. In Parvibaculum lavamentivorans (strain DS-1 / DSM 13023 / NCIMB 13966), this protein is Cysteine--tRNA ligase.